A 156-amino-acid polypeptide reads, in one-letter code: NADH-ubiquinone oxidoreductase chain 6 (156 aa).

Helical transmembrane passes span 1–21 (MILT…YLAS), 24–44 (IVLG…FASF), 49–69 (FAFL…AYFL), 77–97 (ISNF…SALT), and 121–141 (STAP…VIVV).

It belongs to the complex I subunit 6 family.

The protein localises to the mitochondrion membrane. It carries out the reaction a ubiquinone + NADH + 5 H(+)(in) = a ubiquinol + NAD(+) + 4 H(+)(out). Its function is as follows. Core subunit of the mitochondrial membrane respiratory chain NADH dehydrogenase (Complex I) that is believed to belong to the minimal assembly required for catalysis. Complex I functions in the transfer of electrons from NADH to the respiratory chain. The immediate electron acceptor for the enzyme is believed to be ubiquinone. This is NADH-ubiquinone oxidoreductase chain 6 (ND6) from Lumbricus terrestris (Common earthworm).